Here is a 306-residue protein sequence, read N- to C-terminus: MELKDYYAIMGVKPTDDLKTIKTAYRRLARKYHPDVSKEPDAEARFKEVAEAWEVLSDEQRRAEYDQMWQHRNDPQFNHQFHHGDGQSFNAEDFDDIFSSIFGQHARQSRQRPAARGHDIEIEVAVFLEETLTEHKRTISYNLPVYNAFGMIEQEIPKTLNVKIPAGVGNGQRIRLKGQGTPGENGGPNGDLWLVIHIAPHPLFDIVGQDLEIVVPVSPWEAALGAKVTVPTLKESILLTIPPGSQAGQRLRVKGKGLVSKKQTGDLYAVLKIVMPPKPDENTAALWQQLADAQSSFDPRKDWGKA.

In terms of domain architecture, J spans Asp-5–Trp-69.

It localises to the cytoplasm. Its subcellular location is the nucleoid. DNA-binding protein that preferentially recognizes a curved DNA sequence. It is probably a functional analog of DnaJ; displays overlapping activities with DnaJ, but functions under different conditions, probably acting as a molecular chaperone in an adaptive response to environmental stresses other than heat shock. Lacks autonomous chaperone activity; binds native substrates and targets them for recognition by DnaK. Its activity is inhibited by the binding of CbpM. In Shigella sonnei (strain Ss046), this protein is Curved DNA-binding protein.